The following is a 149-amino-acid chain: Aspartate carbamoyltransferase regulatory chain (149 aa).

Zn(2+) contacts are provided by Cys-108, Cys-113, Cys-136, and Cys-139.

It belongs to the PyrI family. In terms of assembly, heterododecamer (2C3:3R2) of six catalytic PyrB chains organized as two trimers (C3), and six regulatory PyrI chains organized as three dimers (R2). Requires Zn(2+) as cofactor.

Functionally, involved in allosteric regulation of aspartate carbamoyltransferase. The polypeptide is Aspartate carbamoyltransferase regulatory chain (pyrI) (Methanocaldococcus jannaschii (strain ATCC 43067 / DSM 2661 / JAL-1 / JCM 10045 / NBRC 100440) (Methanococcus jannaschii)).